We begin with the raw amino-acid sequence, 380 residues long: Cytochrome b (380 aa).

The next 4 helical transmembrane spans lie at 34–54 (FGSL…LLAT), 78–99 (WLIR…YLHI), 114–134 (WNTG…GYVL), and 179–199 (FFAL…IHLT). Heme b contacts are provided by His-84 and His-98. Residues His-183 and His-197 each contribute to the heme b site. Position 202 (His-202) interacts with a ubiquinone. Transmembrane regions (helical) follow at residues 227–247 (LKDI…ALFS), 289–309 (LGGV…PLLH), 321–341 (LSQL…WVGS), and 348–368 (FIII…LLFP).

The protein belongs to the cytochrome b family. As to quaternary structure, the cytochrome bc1 complex contains 11 subunits: 3 respiratory subunits (MT-CYB, CYC1 and UQCRFS1), 2 core proteins (UQCRC1 and UQCRC2) and 6 low-molecular weight proteins (UQCRH/QCR6, UQCRB/QCR7, UQCRQ/QCR8, UQCR10/QCR9, UQCR11/QCR10 and a cleavage product of UQCRFS1). This cytochrome bc1 complex then forms a dimer. Heme b serves as cofactor.

The protein localises to the mitochondrion inner membrane. Its function is as follows. Component of the ubiquinol-cytochrome c reductase complex (complex III or cytochrome b-c1 complex) that is part of the mitochondrial respiratory chain. The b-c1 complex mediates electron transfer from ubiquinol to cytochrome c. Contributes to the generation of a proton gradient across the mitochondrial membrane that is then used for ATP synthesis. In Cepphus grylle (Black guillemot), this protein is Cytochrome b (MT-CYB).